The chain runs to 273 residues: Eukaryotic translation initiation factor 3 subunit J (273 aa).

Residues 1-158 are disordered; the sequence is MPTKKWEDEE…DPSDPSKTVE (158 aa). Positions 34–54 are enriched in acidic residues; sequence DEEANDSDVLDSWDAAEDSEV. Residues 50 to 97 adopt a coiled-coil conformation; it reads EDSEVEREKAKKAAEAKAKAEAEAKANKKTKAARINEHKQRRKEAEES. Basic and acidic residues predominate over residues 55-75; that stretch reads EREKAKKAAEAKAKAEAEAKA. Positions 95–104 are enriched in acidic residues; sequence EESDESDDET. The segment covering 105 to 126 has biased composition (basic and acidic residues); sequence ESQRRERLRRTEKEADLAHAED.

This sequence belongs to the eIF-3 subunit J family. Component of the eukaryotic translation initiation factor 3 (eIF-3) complex.

It localises to the cytoplasm. Functionally, component of the eukaryotic translation initiation factor 3 (eIF-3) complex, which is involved in protein synthesis of a specialized repertoire of mRNAs and, together with other initiation factors, stimulates binding of mRNA and methionyl-tRNAi to the 40S ribosome. The eIF-3 complex specifically targets and initiates translation of a subset of mRNAs involved in cell proliferation. This chain is Eukaryotic translation initiation factor 3 subunit J, found in Pyricularia oryzae (strain 70-15 / ATCC MYA-4617 / FGSC 8958) (Rice blast fungus).